Here is a 191-residue protein sequence, read N- to C-terminus: MSPISILLIGFAMSTDAFAAAIGKGAAMRRPVFRDALRAGIIFGVIEAITPIIGWLLGRAALQYVEAFDHWIAFGLLGALGIHMIYNGLRPDSAEEDEDPSQHHGFWKLALTGFATSIDAMAVGIGLAFMDVHIGVMAAVIGLCTLTMVTAGIMFGRVLGSMVGKRAEIIGGVILVIIGATILYEHLHGVG.

The next 6 membrane-spanning stretches (helical) occupy residues 3-23, 37-57, 65-85, 107-129, 144-164, and 169-189; these read PISILLIGFAMSTDAFAAAIG, LRAGIIFGVIEAITPIIGWLL, VEAFDHWIAFGLLGALGIHMI, WKLALTGFATSIDAMAVGIGLAF, CTLTMVTAGIMFGRVLGSMVG, and IIGGVILVIIGATILYEHLHG.

It belongs to the MntP (TC 9.B.29) family.

It localises to the cell inner membrane. Its function is as follows. Probably functions as a manganese efflux pump. In Stenotrophomonas maltophilia (strain K279a), this protein is Putative manganese efflux pump MntP.